A 352-amino-acid chain; its full sequence is Inhibin beta C chain (352 aa).

Positions 1 to 18 (MASSLLLALLFLTPTTVV) are cleaved as a signal peptide. Residues 19 to 236 (NPKTEGPCPA…VEGKHRVRRR (218 aa)) constitute a propeptide that is removed on maturation. Asn111, Asn143, Asn161, and Asn173 each carry an N-linked (GlcNAc...) asparagine glycan. Cystine bridges form between Cys240-Cys248, Cys247-Cys317, Cys276-Cys349, and Cys280-Cys351.

It belongs to the TGF-beta family. Homodimeric or heterodimeric through association with alpha and beta subunits, linked by one or more disulfide bonds. Inhibins are heterodimers of one alpha and one beta subunit. Activins are homo- or heterodimers of beta subunits only. In terms of tissue distribution, mainly expressed in the adult liver.

It is found in the secreted. Its function is as follows. Inhibins and activins inhibit and activate, respectively, the secretion of follitropin by the pituitary gland. Inhibins/activins are involved in regulating a number of diverse functions such as hypothalamic and pituitary hormone secretion, gonadal hormone secretion, germ cell development and maturation, erythroid differentiation, insulin secretion, nerve cell survival, embryonic axial development or bone growth, depending on their subunit composition. Inhibins appear to oppose the functions of activins. This is Inhibin beta C chain (Inhbc) from Mus musculus (Mouse).